The sequence spans 603 residues: Polypeptide N-acetylgalactosaminyltransferase 10 (603 aa).

The Cytoplasmic portion of the chain corresponds to 1–11 (MRRKEKRLLQA). A helical; Signal-anchor for type II membrane protein transmembrane segment spans residues 12 to 31 (VALVLAALVLLPNVGLWALY). The Lumenal segment spans residues 32–603 (RERQPDGTPG…STVLEKFNRN (572 aa)). A disordered region spans residues 38 to 59 (GTPGGSGAAVAPAAGQGSHSRQ). The span at 45 to 55 (AAVAPAAGQGS) shows a compositional bias: low complexity. Residues Asn-124 and Asn-146 are each glycosylated (N-linked (GlcNAc...) asparagine). Intrachain disulfides connect Cys-135/Cys-365, Cys-356/Cys-432, Cys-471/Cys-488, Cys-523/Cys-538, and Cys-563/Cys-578. Positions 144–253 (LPNTSIIIPF…VNWLPPLLDR (110 aa)) are catalytic subdomain A. 4 residues coordinate substrate: His-154, Glu-156, Asp-185, and Arg-214. Asp-237 lines the Mn(2+) pocket. Ser-238 serves as a coordination point for substrate. His-239 serves as a coordination point for Mn(2+). Residues 311-373 (PFESPVMAGG…PCSRVGHIYR (63 aa)) are catalytic subdomain B. Substrate is bound at residue Trp-342. His-370 lines the Mn(2+) pocket. 2 residues coordinate substrate: Arg-373 and Tyr-378. The segment at 373 to 384 (RKYVPYKVPAGV) is flexible loop. The Ricin B-type lectin domain maps to 458–590 (AAWGEIRNVG…SSLTQQWLFE (133 aa)). The N-linked (GlcNAc...) asparagine glycan is linked to Asn-593.

This sequence belongs to the glycosyltransferase 2 family. GalNAc-T subfamily. Requires Mn(2+) as cofactor. In terms of tissue distribution, widely expressed. Expressed at high level in small intestine, and at intermediate levels in stomach, pancreas, ovary, thyroid gland and spleen. Weakly expressed in other tissues.

It is found in the golgi apparatus membrane. The catalysed reaction is L-seryl-[protein] + UDP-N-acetyl-alpha-D-galactosamine = a 3-O-[N-acetyl-alpha-D-galactosaminyl]-L-seryl-[protein] + UDP + H(+). It catalyses the reaction L-threonyl-[protein] + UDP-N-acetyl-alpha-D-galactosamine = a 3-O-[N-acetyl-alpha-D-galactosaminyl]-L-threonyl-[protein] + UDP + H(+). The protein operates within protein modification; protein glycosylation. Functionally, catalyzes the initial reaction in O-linked oligosaccharide biosynthesis, the transfer of an N-acetyl-D-galactosamine residue to a serine or threonine residue on the protein receptor. Has activity toward Muc5Ac and EA2 peptide substrates. The chain is Polypeptide N-acetylgalactosaminyltransferase 10 (GALNT10) from Homo sapiens (Human).